Consider the following 223-residue polypeptide: ATP phosphoribosyltransferase (223 aa).

Belongs to the ATP phosphoribosyltransferase family. Short subfamily. In terms of assembly, heteromultimer composed of HisG and HisZ subunits.

It localises to the cytoplasm. It catalyses the reaction 1-(5-phospho-beta-D-ribosyl)-ATP + diphosphate = 5-phospho-alpha-D-ribose 1-diphosphate + ATP. It functions in the pathway amino-acid biosynthesis; L-histidine biosynthesis; L-histidine from 5-phospho-alpha-D-ribose 1-diphosphate: step 1/9. In terms of biological role, catalyzes the condensation of ATP and 5-phosphoribose 1-diphosphate to form N'-(5'-phosphoribosyl)-ATP (PR-ATP). Has a crucial role in the pathway because the rate of histidine biosynthesis seems to be controlled primarily by regulation of HisG enzymatic activity. This is ATP phosphoribosyltransferase from Halothermothrix orenii (strain H 168 / OCM 544 / DSM 9562).